Reading from the N-terminus, the 311-residue chain is Urease accessory protein UreD 3 (311 aa).

This sequence belongs to the UreD family. UreD, UreF and UreG form a complex that acts as a GTP-hydrolysis-dependent molecular chaperone, activating the urease apoprotein by helping to assemble the nickel containing metallocenter of UreC. The UreE protein probably delivers the nickel.

Its subcellular location is the cytoplasm. Required for maturation of urease via the functional incorporation of the urease nickel metallocenter. In Methylorubrum populi (strain ATCC BAA-705 / NCIMB 13946 / BJ001) (Methylobacterium populi), this protein is Urease accessory protein UreD 3.